Consider the following 228-residue polypeptide: 2,3-bisphosphoglycerate-dependent phosphoglycerate mutase (228 aa).

Substrate is bound by residues 8 to 15, 21 to 22, Arg60, 87 to 90, Lys98, 114 to 115, and 183 to 184; these read RHGQSVWN, TG, ERHY, RR, and GN. The active-site Tele-phosphohistidine intermediate is the His9. Glu87 serves as the catalytic Proton donor/acceptor.

This sequence belongs to the phosphoglycerate mutase family. BPG-dependent PGAM subfamily. In terms of assembly, homodimer.

The enzyme catalyses (2R)-2-phosphoglycerate = (2R)-3-phosphoglycerate. It functions in the pathway carbohydrate degradation; glycolysis; pyruvate from D-glyceraldehyde 3-phosphate: step 3/5. Its function is as follows. Catalyzes the interconversion of 2-phosphoglycerate and 3-phosphoglycerate. This Rhodospirillum centenum (strain ATCC 51521 / SW) protein is 2,3-bisphosphoglycerate-dependent phosphoglycerate mutase.